A 104-amino-acid chain; its full sequence is Protein SMALL AUXIN UP-REGULATED RNA 12 (104 aa).

It belongs to the ARG7 family. Expressed in flowers and etiolated hypocotyls.

The protein resides in the cell membrane. Functionally, provide a mechanistic link between auxin and plasma membrane H(+)-ATPases (PM H(+)-ATPases, e.g. AHA1 and AHA2), and triggers PM H(+)-ATPases activity by promoting phosphorylation of their C-terminal autoinhibitory domain as a result of PP2C-D subfamily of type 2C phosphatases inhibition, thus leading to the acidification of the apoplast and the facilitation of solutes and water uptake to drive cell expansion. Triggers plant growth probably by promoting cell elongation. Regulates branch angles and bending. This is Protein SMALL AUXIN UP-REGULATED RNA 12 from Arabidopsis thaliana (Mouse-ear cress).